The following is a 283-amino-acid chain: Methyltransferase cpsF (283 aa).

This sequence belongs to the methyltransferase superfamily. LaeA methyltransferase family.

It carries out the reaction campesine A + S-adenosyl-L-methionine = campesine B + S-adenosyl-L-homocysteine + H(+). Its pathway is alkaloid biosynthesis. Functionally, methyltransferase; part of the gene cluster that mediates the biosynthesis of campesine G, a dimeric indole piperazine alkaloid that shows good insecticidal activity Galleria mellonella. Within the pathway, cpsF methylates campesine A at N13 of piperazine ring to produce campesine B. The non-canonical non-ribosomal peptide synthetase cpsA catalyzes the first steps of the pathway by producing L-tryptophanal and L-valinal from their respective amino-acids. These products condensate spontaneously to form trypyl-valyl pyrazine also known as didehydrocampesine A. The NmrA-like family domain-containing oxidoreductase cpsB is the next enzyme in cps pathway and reduces the unstable didehydrocampesine A to campesine A. The methyltransferase cpsF and the acetyltransferase cpsE both recognize N13 of piperazine ring to carry out methylation and acetylation of campesine A to produce campesine C and B, respectively. The cytochrome P450 monooxygenase cpsD then acts as a dimerase that catalyzes oxidative heterocoupling between campesine B and C to produce heterodimers with unexpected 6/5/6/6/6/6/5/6 eight-ring scaffold called campesine D. Finally,the cytochrome P450 monooxygenase cpsC is a regioselective dehydrogenase that catalyzes dehydrogenation reaction towards C2-N1 to produce campesine G. The sequence is that of Methyltransferase cpsF from Aspergillus campestris (strain IBT 28561).